The sequence spans 222 residues: Putative N-acetylmannosamine-6-phosphate 2-epimerase (222 aa).

Belongs to the NanE family.

The catalysed reaction is an N-acyl-D-glucosamine 6-phosphate = an N-acyl-D-mannosamine 6-phosphate. It functions in the pathway amino-sugar metabolism; N-acetylneuraminate degradation; D-fructose 6-phosphate from N-acetylneuraminate: step 3/5. In terms of biological role, converts N-acetylmannosamine-6-phosphate (ManNAc-6-P) to N-acetylglucosamine-6-phosphate (GlcNAc-6-P). In Staphylococcus aureus (strain USA300), this protein is Putative N-acetylmannosamine-6-phosphate 2-epimerase.